Consider the following 193-residue polypeptide: 5'RNA triphosphatase A449R (193 aa).

Mn(2+) is required as a cofactor.

The enzyme catalyses a 5'-end triphospho-ribonucleoside in mRNA + H2O = a 5'-end diphospho-ribonucleoside in mRNA + phosphate + H(+). Functionally, catalyzes the first stes of cap formation: by removing the gamma-phosphate from the 5'-triphosphate end of nascent mRNA to yield a diphosphate end. This Chlorella (PBCV-1) protein is 5'RNA triphosphatase A449R (A449R).